A 210-amino-acid polypeptide reads, in one-letter code: Protein-L-isoaspartate O-methyltransferase (210 aa).

Residue S59 is part of the active site.

It belongs to the methyltransferase superfamily. L-isoaspartyl/D-aspartyl protein methyltransferase family.

It is found in the cytoplasm. It carries out the reaction [protein]-L-isoaspartate + S-adenosyl-L-methionine = [protein]-L-isoaspartate alpha-methyl ester + S-adenosyl-L-homocysteine. Its function is as follows. Catalyzes the methyl esterification of L-isoaspartyl residues in peptides and proteins that result from spontaneous decomposition of normal L-aspartyl and L-asparaginyl residues. It plays a role in the repair and/or degradation of damaged proteins. In Nitratidesulfovibrio vulgaris (strain ATCC 29579 / DSM 644 / CCUG 34227 / NCIMB 8303 / VKM B-1760 / Hildenborough) (Desulfovibrio vulgaris), this protein is Protein-L-isoaspartate O-methyltransferase.